The primary structure comprises 118 residues: Large ribosomal subunit protein bL17 (118 aa).

Belongs to the bacterial ribosomal protein bL17 family. Part of the 50S ribosomal subunit. Contacts protein L32.

The protein is Large ribosomal subunit protein bL17 of Aster yellows witches'-broom phytoplasma (strain AYWB).